Here is a 137-residue protein sequence, read N- to C-terminus: uncharacterized protein (137 aa).

The helical transmembrane segment at 75–91 (MFLDAMVILAVASGVSL) threads the bilayer. Residues 93–116 (PQLPGRRSHNASTPGAKKPGKDHG) are disordered.

The protein resides in the membrane. This is an uncharacterized protein from Saccharomyces cerevisiae (strain ATCC 204508 / S288c) (Baker's yeast).